The chain runs to 278 residues: HTH-type transcriptional activator RhaS (278 aa).

The HTH araC/xylS-type domain occupies 174–272 (NLLLAWLEDH…NWSPRDIRQG (99 aa)). 2 DNA-binding regions (H-T-H motif) span residues 191–212 (DAVA…KQQT) and 239–262 (VTDI…RREF).

As to quaternary structure, binds DNA as a dimer.

The protein localises to the cytoplasm. Its function is as follows. Activates expression of the rhaBAD and rhaT operons. In Escherichia coli O127:H6 (strain E2348/69 / EPEC), this protein is HTH-type transcriptional activator RhaS.